Consider the following 82-residue polypeptide: Small ribosomal subunit protein bS16 (82 aa).

It belongs to the bacterial ribosomal protein bS16 family.

This is Small ribosomal subunit protein bS16 from Cyanothece sp. (strain PCC 7425 / ATCC 29141).